Consider the following 510-residue polypeptide: 2-isopropylmalate synthase (510 aa).

The Pyruvate carboxyltransferase domain maps to 5–267 (LVIFDTTLRD…DTRIDTTQIV (263 aa)). Mn(2+) contacts are provided by Asp14, His202, His204, and Asn238. Residues 392–510 (RLLSLVAHSE…SSLERTHPQV (119 aa)) are regulatory domain.

This sequence belongs to the alpha-IPM synthase/homocitrate synthase family. LeuA type 1 subfamily. In terms of assembly, homodimer. Mn(2+) serves as cofactor.

Its subcellular location is the cytoplasm. The catalysed reaction is 3-methyl-2-oxobutanoate + acetyl-CoA + H2O = (2S)-2-isopropylmalate + CoA + H(+). It functions in the pathway amino-acid biosynthesis; L-leucine biosynthesis; L-leucine from 3-methyl-2-oxobutanoate: step 1/4. Its function is as follows. Catalyzes the condensation of the acetyl group of acetyl-CoA with 3-methyl-2-oxobutanoate (2-ketoisovalerate) to form 3-carboxy-3-hydroxy-4-methylpentanoate (2-isopropylmalate). The protein is 2-isopropylmalate synthase of Nitrosomonas eutropha (strain DSM 101675 / C91 / Nm57).